The chain runs to 180 residues: Large ribosomal subunit protein uL6 (180 aa).

It belongs to the universal ribosomal protein uL6 family. As to quaternary structure, part of the 50S ribosomal subunit.

This protein binds to the 23S rRNA, and is important in its secondary structure. It is located near the subunit interface in the base of the L7/L12 stalk, and near the tRNA binding site of the peptidyltransferase center. In Cutibacterium acnes (strain DSM 16379 / KPA171202) (Propionibacterium acnes), this protein is Large ribosomal subunit protein uL6.